A 145-amino-acid polypeptide reads, in one-letter code: Large ribosomal subunit protein uL15 (145 aa).

The segment at 1 to 50 (MRLNTLSPAAGSKPEKQRRGRGIGSGLGKTGGRGVKGQTSRSGGGKVRAG) is disordered. Gly residues predominate over residues 22–35 (GIGSGLGKTGGRGV).

The protein belongs to the universal ribosomal protein uL15 family. In terms of assembly, part of the 50S ribosomal subunit.

In terms of biological role, binds to the 23S rRNA. The chain is Large ribosomal subunit protein uL15 from Aeromonas salmonicida (strain A449).